The primary structure comprises 318 residues: MLVRLVFAGTPESALPALCRLIDSPRHDVIAVLTRPDAASGRRGKPEPSPVAREALDRGIPLLRPARPNSPVFVSELSEWAPECCVVVAYGALLGSPLLAVPPRGWVNLHFSLLPAWRGAAPVQAAIAAGDTITGATTFQIEPSLDSGPVYGVVTETIQPTDTAGDLLERLAVSGATLLSSTLDGIADAILTPRQQPVDGVSFAPKITVEQARVCWDLPAPVVERRIRAVTPNPGAWTLVGKLRVKLGPVRFDSGAVEVPRLLKPLLPGGIHVDHKSVWIGTGSDPVRLSKVQPQGKKFMNAVDWAHGARLDPAARAS.

Position 112–115 (112–115 (SLLP)) interacts with (6S)-5,6,7,8-tetrahydrofolate.

The protein belongs to the Fmt family.

The catalysed reaction is L-methionyl-tRNA(fMet) + (6R)-10-formyltetrahydrofolate = N-formyl-L-methionyl-tRNA(fMet) + (6S)-5,6,7,8-tetrahydrofolate + H(+). In terms of biological role, attaches a formyl group to the free amino group of methionyl-tRNA(fMet). The formyl group appears to play a dual role in the initiator identity of N-formylmethionyl-tRNA by promoting its recognition by IF2 and preventing the misappropriation of this tRNA by the elongation apparatus. This Mycobacterium leprae (strain Br4923) protein is Methionyl-tRNA formyltransferase.